We begin with the raw amino-acid sequence, 200 residues long: Guanylyl cyclase-activating protein 2 (200 aa).

Gly-2 is lipidated: N-myristoyl glycine. EF-hand domains are found at residues 14–31 (GEID…FVME), 53–88 (EASQ…VLRG), 89–124 (TLEH…IYQL), and 141–176 (TPEE…DKWV). Asp-66, Asn-68, Asp-70, Thr-72, Glu-77, Asp-102, Asp-104, Asn-106, Cys-108, Glu-113, Asp-154, Asn-156, Asp-158, Gln-160, and Glu-165 together coordinate Ca(2+).

In terms of processing, the N-terminus is blocked. As to expression, in the retina, it is expressed in cone and rod photoreceptor cells.

The protein resides in the cell membrane. Its subcellular location is the photoreceptor inner segment. The protein localises to the cell projection. It localises to the cilium. It is found in the photoreceptor outer segment. Stimulates two retinal guanylyl cyclases (GCs) GUCY2D and GUCY2F when free calcium ions concentration is low, and inhibits GUCY2D and GUCY2F when free calcium ions concentration is elevated. This Ca(2+)-sensitive regulation of GCs is a key event in recovery of the dark state of rod photoreceptors following light exposure. May be involved in cone photoreceptor response and recovery of response in bright light. In Homo sapiens (Human), this protein is Guanylyl cyclase-activating protein 2 (GUCA1B).